We begin with the raw amino-acid sequence, 310 residues long: MAMAERPRPGWASYQNPNINNCQDMGNSILLLLGLIVCINIGINLVTLLWSRIRILLHRMFHIICEKETSTSLGKLVQPLRKQTYPKVHLRCTMDPVKMTVTPPPTRRRYRHRAPPSRRARCPIAWAPDTDDEKPPHQHPAICSRHWNDSKDWEGFQSMQEVWEPWTQDGLEQPPQTIRFQPAVEARPLKSEIRSDQGLEAYVYTVNPPPPSPEALSHKNNAAGSGGCVEGEQAQGQPVSPSFLGPANVPEIPRRHSSGRIVYDARDVRRRLRELTQEVEALSHCYPLVSGSSAAEGTGKDWVYRPLKGR.

A helical transmembrane segment spans residues 29–49 (ILLLLGLIVCINIGINLVTLL). Residues 215–238 (ALSHKNNAAGSGGCVEGEQAQGQP) are disordered. Residues 262-286 (VYDARDVRRRLRELTQEVEALSHCY) adopt a coiled-coil conformation.

Testis-specific. Exclusively present in cytoplasm of steps 14-16 elongated spermatids (at protein level).

The protein resides in the membrane. It localises to the cytoplasm. Functionally, required for proper cytoplasm removal during spermatogenesis. The chain is Spermatid maturation protein 1 (Spem1) from Mus musculus (Mouse).